The sequence spans 328 residues: Tryptophan--tRNA ligase (328 aa).

ATP contacts are provided by residues 9-11 (QPS) and 17-18 (GN). The short motif at 10-18 (PSGVITIGN) is the 'HIGH' region element. Asp132 contributes to the L-tryptophan binding site. Residues 144–146 (GED), Ile183, and 192–196 (KMSKS) each bind ATP. The 'KMSKS' region motif lies at 192 to 196 (KMSKS).

This sequence belongs to the class-I aminoacyl-tRNA synthetase family. As to quaternary structure, homodimer.

It is found in the cytoplasm. It catalyses the reaction tRNA(Trp) + L-tryptophan + ATP = L-tryptophyl-tRNA(Trp) + AMP + diphosphate + H(+). Inhibited by indolmycin, a competitive inhibitor for tryptophan. In terms of biological role, catalyzes the attachment of tryptophan to tRNA(Trp). The polypeptide is Tryptophan--tRNA ligase (Geobacillus stearothermophilus (Bacillus stearothermophilus)).